The chain runs to 456 residues: uncharacterized protein (456 aa).

Residues 3 to 61 (LMRKNETREFLIEDIEFPAVGVAFYNDKKVYIKGAVPGQKVLARVSKVRREKIEAKLKE) enclose the TRAM domain. [4Fe-4S] cluster-binding residues include C74, C80, C83, and C163. Residues Q289, Y318, E339, and D384 each coordinate S-adenosyl-L-methionine. C411 (nucleophile) is an active-site residue.

It belongs to the class I-like SAM-binding methyltransferase superfamily. RNA M5U methyltransferase family.

This is an uncharacterized protein from Clostridium acetobutylicum (strain ATCC 824 / DSM 792 / JCM 1419 / IAM 19013 / LMG 5710 / NBRC 13948 / NRRL B-527 / VKM B-1787 / 2291 / W).